The chain runs to 230 residues: Ribose-5-phosphate isomerase A (230 aa).

Residues 31–34 (TGST), 88–91 (DGSD), and 101–104 (KGGG) each bind substrate. Glu110 serves as the catalytic Proton acceptor. Position 128 (Lys128) interacts with substrate.

This sequence belongs to the ribose 5-phosphate isomerase family. As to quaternary structure, homodimer.

It carries out the reaction aldehydo-D-ribose 5-phosphate = D-ribulose 5-phosphate. Its pathway is carbohydrate degradation; pentose phosphate pathway; D-ribose 5-phosphate from D-ribulose 5-phosphate (non-oxidative stage): step 1/1. In terms of biological role, catalyzes the reversible conversion of ribose-5-phosphate to ribulose 5-phosphate. This Lactobacillus acidophilus (strain ATCC 700396 / NCK56 / N2 / NCFM) protein is Ribose-5-phosphate isomerase A.